The sequence spans 86 residues: Probable weak neurotoxin NNAM1 (86 aa).

Positions 1–21 (MKTLLLSLVVVTIVCLDLGYT) are cleaved as a signal peptide. Cystine bridges form between C24–C45, C27–C32, C38–C63, C67–C78, and C79–C84.

This sequence belongs to the three-finger toxin family. Ancestral subfamily. Orphan group II sub-subfamily. Expressed by the venom gland.

It is found in the secreted. Functionally, binds with low affinity to muscular (alpha-1-beta-1-delta-epsilon/CHRNA1-CHRNB1-CHRND-CHRNE) and very low affinity to neuronal (alpha-7/CHRNA7) nicotinic acetylcholine receptor (nAChR). The sequence is that of Probable weak neurotoxin NNAM1 from Naja atra (Chinese cobra).